Consider the following 600-residue polypeptide: Proline--tRNA ligase (600 aa).

The protein belongs to the class-II aminoacyl-tRNA synthetase family. ProS type 1 subfamily. In terms of assembly, homodimer.

It is found in the cytoplasm. It carries out the reaction tRNA(Pro) + L-proline + ATP = L-prolyl-tRNA(Pro) + AMP + diphosphate. Functionally, catalyzes the attachment of proline to tRNA(Pro) in a two-step reaction: proline is first activated by ATP to form Pro-AMP and then transferred to the acceptor end of tRNA(Pro). As ProRS can inadvertently accommodate and process non-cognate amino acids such as alanine and cysteine, to avoid such errors it has two additional distinct editing activities against alanine. One activity is designated as 'pretransfer' editing and involves the tRNA(Pro)-independent hydrolysis of activated Ala-AMP. The other activity is designated 'posttransfer' editing and involves deacylation of mischarged Ala-tRNA(Pro). The misacylated Cys-tRNA(Pro) is not edited by ProRS. The sequence is that of Proline--tRNA ligase from Prochlorococcus marinus (strain MIT 9301).